We begin with the raw amino-acid sequence, 335 residues long: Spike protein P1 (335 aa).

In terms of assembly, monomer.

It is found in the virion. In terms of biological role, receptor binding protein located at the fivefold vertices. The chain is Spike protein P1 (I) from Pseudoalteromonas espejiana (Bacteriophage PM2).